Here is a 54-residue protein sequence, read N- to C-terminus: uncharacterized protein (54 aa).

The tract at residues 1 to 54 is disordered; it reads MWTLKARKEHTGISGKPTARTDRHGSTRSGDSELQASARRFSRLPDRCGAQGVT.

This is an uncharacterized protein from Mycobacterium tuberculosis (strain ATCC 25618 / H37Rv).